The primary structure comprises 268 residues: Orotidine 5'-phosphate decarboxylase (268 aa).

Substrate is bound by residues D38, 60 to 62, 92 to 101, Y218, and R236; these read KTH and DRKFADIGNT. Catalysis depends on K94, which acts as the Proton donor.

The protein belongs to the OMP decarboxylase family.

It carries out the reaction orotidine 5'-phosphate + H(+) = UMP + CO2. It functions in the pathway pyrimidine metabolism; UMP biosynthesis via de novo pathway; UMP from orotate: step 2/2. This is Orotidine 5'-phosphate decarboxylase (URA3) from Candida tropicalis (Yeast).